Reading from the N-terminus, the 218-residue chain is GTP cyclohydrolase 1 (218 aa).

C109, H112, and C180 together coordinate Zn(2+).

The protein belongs to the GTP cyclohydrolase I family. As to quaternary structure, toroid-shaped homodecamer, composed of two pentamers of five dimers.

The enzyme catalyses GTP + H2O = 7,8-dihydroneopterin 3'-triphosphate + formate + H(+). The protein operates within cofactor biosynthesis; 7,8-dihydroneopterin triphosphate biosynthesis; 7,8-dihydroneopterin triphosphate from GTP: step 1/1. This Actinobacillus pleuropneumoniae serotype 5b (strain L20) protein is GTP cyclohydrolase 1.